The sequence spans 118 residues: Aspartate 1-decarboxylase (118 aa).

Residue serine 25 is the Schiff-base intermediate with substrate; via pyruvic acid of the active site. At serine 25 the chain carries Pyruvic acid (Ser). Threonine 57 is a substrate binding site. The active-site Proton donor is the tyrosine 58. 73–75 (GAA) contributes to the substrate binding site.

The protein belongs to the PanD family. As to quaternary structure, heterooctamer of four alpha and four beta subunits. The cofactor is pyruvate. In terms of processing, is synthesized initially as an inactive proenzyme, which is activated by self-cleavage at a specific serine bond to produce a beta-subunit with a hydroxyl group at its C-terminus and an alpha-subunit with a pyruvoyl group at its N-terminus.

It localises to the cytoplasm. It catalyses the reaction L-aspartate + H(+) = beta-alanine + CO2. Its pathway is cofactor biosynthesis; (R)-pantothenate biosynthesis; beta-alanine from L-aspartate: step 1/1. In terms of biological role, catalyzes the pyruvoyl-dependent decarboxylation of aspartate to produce beta-alanine. This chain is Aspartate 1-decarboxylase, found in Caulobacter vibrioides (strain ATCC 19089 / CIP 103742 / CB 15) (Caulobacter crescentus).